Here is a 119-residue protein sequence, read N- to C-terminus: Large ribosomal subunit protein uL18 (119 aa).

This sequence belongs to the universal ribosomal protein uL18 family. Part of the 50S ribosomal subunit; part of the 5S rRNA/L5/L18/L25 subcomplex. Contacts the 5S and 23S rRNAs.

Its function is as follows. This is one of the proteins that bind and probably mediate the attachment of the 5S RNA into the large ribosomal subunit, where it forms part of the central protuberance. The protein is Large ribosomal subunit protein uL18 of Desulfovibrio desulfuricans (strain ATCC 27774 / DSM 6949 / MB).